A 364-amino-acid chain; its full sequence is Dual-specificity RNA methyltransferase RlmN (364 aa).

The active-site Proton acceptor is the Glu91. The region spanning 97–333 (ESDRGTLCIS…VTVRKTRGDD (237 aa)) is the Radical SAM core domain. Residues Cys104 and Cys338 are joined by a disulfide bond. The [4Fe-4S] cluster site is built by Cys111, Cys115, and Cys118. Residues 164–165 (GE), Ser196, 218–220 (SLH), and Asn295 contribute to the S-adenosyl-L-methionine site. Cys338 (S-methylcysteine intermediate) is an active-site residue.

It belongs to the radical SAM superfamily. RlmN family. It depends on [4Fe-4S] cluster as a cofactor.

The protein resides in the cytoplasm. It carries out the reaction adenosine(2503) in 23S rRNA + 2 reduced [2Fe-2S]-[ferredoxin] + 2 S-adenosyl-L-methionine = 2-methyladenosine(2503) in 23S rRNA + 5'-deoxyadenosine + L-methionine + 2 oxidized [2Fe-2S]-[ferredoxin] + S-adenosyl-L-homocysteine. The catalysed reaction is adenosine(37) in tRNA + 2 reduced [2Fe-2S]-[ferredoxin] + 2 S-adenosyl-L-methionine = 2-methyladenosine(37) in tRNA + 5'-deoxyadenosine + L-methionine + 2 oxidized [2Fe-2S]-[ferredoxin] + S-adenosyl-L-homocysteine. Specifically methylates position 2 of adenine 2503 in 23S rRNA and position 2 of adenine 37 in tRNAs. m2A2503 modification seems to play a crucial role in the proofreading step occurring at the peptidyl transferase center and thus would serve to optimize ribosomal fidelity. This is Dual-specificity RNA methyltransferase RlmN from Neisseria meningitidis serogroup A / serotype 4A (strain DSM 15465 / Z2491).